Consider the following 2157-residue polypeptide: Conidial yellow pigment biosynthesis polyketide synthase (2157 aa).

The tract at residues 8–244 is N-terminal acylcarrier protein transacylase domain (SAT); sequence YLFGDQTGDF…VMVPIHGPFH (237 aa). The region spanning 376–807 is the Ketosynthase family 3 (KS3) domain; the sequence is LSKIAIIGMS…GGNTALLLED (432 aa). Active-site for beta-ketoacyl synthase activity residues include Cys548, His683, and His725. A malonyl-CoA:ACP transacylase (MAT) domain region spans residues 912–1232; that stretch reads FLFTGQGAQY…LSSLYLAGVD (321 aa). The active-site For acyl/malonyl transferase activity is Ser1001. The interval 1290–1603 is product template (PT) domain; that stretch reads TTSAQRVVES…RKILDIALPP (314 aa). The segment at 1294–1425 is N-terminal hotdog fold; that stretch reads QRVVESRDDG…CEVKLFDCMA (132 aa). In terms of domain architecture, PKS/mFAS DH spans 1294 to 1598; sequence QRVVESRDDG…FQALSRKILD (305 aa). His1326 (proton acceptor; for dehydratase activity) is an active-site residue. Residues 1453 to 1598 are C-terminal hotdog fold; it reads AHRLRRGMVY…FQALSRKILD (146 aa). Residue Asp1511 is the Proton donor; for dehydratase activity of the active site. The interval 1607 to 1638 is disordered; the sequence is SKAQTSPIQSSAPQKPIETAKPTSRPAPPVTM. Positions 1608-1619 are enriched in polar residues; the sequence is KAQTSPIQSSAP. The Carrier 1 domain maps to 1645–1722; it reads SAGPSVVVRA…DFKRFVTQLS (78 aa). O-(pantetheine 4'-phosphoryl)serine is present on Ser1682. A disordered region spans residues 1725–1760; it reads VASDSSSTDRESEYSFNGDSCSGLSSPASPGTVSPP. Positions 1741 to 1759 are enriched in polar residues; that stretch reads NGDSCSGLSSPASPGTVSP. In terms of domain architecture, Carrier 2 spans 1767-1844; the sequence is IHENGTMKEI…QIETALDLKP (78 aa). Position 1804 is an O-(pantetheine 4'-phosphoryl)serine (Ser1804). The segment at 1847–1888 is disordered; the sequence is VPTAVPQSQPITLPQSQSTKQLSTRPTSSSDNHPPATSILLQ. Residues 1851-1878 are compositionally biased toward polar residues; sequence VPQSQPITLPQSQSTKQLSTRPTSSSDN. Positions 1877-2149 are claisen cyclase domain; that stretch reads DNHPPATSIL…ELATFMKNAL (273 aa). Ser1967 serves as the catalytic For thioesterase activity.

It depends on pantetheine 4'-phosphate as a cofactor.

The catalysed reaction is 6 malonyl-CoA + acetyl-CoA + 6 H(+) = naphtopyrone YWA1 + 6 CO2 + 7 CoA + H2O. The protein operates within polyketide biosynthesis; heptaketide naphthopyrone YWA1 biosynthesis. In terms of biological role, non-reducing polyketide synthase that condenses acetate units to form a heptaketide naphthopyrene YWA1, a yellow pigment found in mature asexual spores (conidia), via a polyketomethylene intermediate step. This chain is Conidial yellow pigment biosynthesis polyketide synthase, found in Emericella nidulans (strain FGSC A4 / ATCC 38163 / CBS 112.46 / NRRL 194 / M139) (Aspergillus nidulans).